Consider the following 208-residue polypeptide: Octanoyltransferase (208 aa).

The BPL/LPL catalytic domain maps to 29-208; sequence KTQDELVWLL…KEFNKVFCNC (180 aa). Residues 68–75, 140–142, and 153–155 each bind substrate; these read RGGKYTYH, AFG, and GVS. Residue cysteine 171 is the Acyl-thioester intermediate of the active site.

This sequence belongs to the LipB family.

The protein localises to the cytoplasm. It catalyses the reaction octanoyl-[ACP] + L-lysyl-[protein] = N(6)-octanoyl-L-lysyl-[protein] + holo-[ACP] + H(+). Its pathway is protein modification; protein lipoylation via endogenous pathway; protein N(6)-(lipoyl)lysine from octanoyl-[acyl-carrier-protein]: step 1/2. Catalyzes the transfer of endogenously produced octanoic acid from octanoyl-acyl-carrier-protein onto the lipoyl domains of lipoate-dependent enzymes. Lipoyl-ACP can also act as a substrate although octanoyl-ACP is likely to be the physiological substrate. This is Octanoyltransferase from Ehrlichia ruminantium (strain Gardel).